The sequence spans 278 residues: HTH-type transcriptional activator RhaS (278 aa).

Residues 174–272 (NQLMAWLEDH…SWSPREIRQG (99 aa)) enclose the HTH araC/xylS-type domain. 2 consecutive DNA-binding regions (H-T-H motif) follow at residues 191 to 212 (ETVA…KQHT) and 239 to 262 (VTDI…RREF).

In terms of assembly, binds DNA as a dimer.

The protein localises to the cytoplasm. Its function is as follows. Activates expression of the rhaBAD and rhaT operons. The sequence is that of HTH-type transcriptional activator RhaS from Enterobacter sp. (strain 638).